The following is a 307-amino-acid chain: Ribosomal RNA small subunit methyltransferase H (307 aa).

S-adenosyl-L-methionine-binding positions include 33–35, Asp51, Phe82, Asp96, and Gln103; that span reads GGY.

It belongs to the methyltransferase superfamily. RsmH family.

The protein localises to the cytoplasm. The catalysed reaction is cytidine(1402) in 16S rRNA + S-adenosyl-L-methionine = N(4)-methylcytidine(1402) in 16S rRNA + S-adenosyl-L-homocysteine + H(+). Specifically methylates the N4 position of cytidine in position 1402 (C1402) of 16S rRNA. In Rickettsia africae (strain ESF-5), this protein is Ribosomal RNA small subunit methyltransferase H.